Here is a 301-residue protein sequence, read N- to C-terminus: Acetylglutamate kinase (301 aa).

Residues 68 to 69, Arg-90, and Asn-195 contribute to the substrate site; that span reads GG.

The protein belongs to the acetylglutamate kinase family. ArgB subfamily.

The protein resides in the cytoplasm. The catalysed reaction is N-acetyl-L-glutamate + ATP = N-acetyl-L-glutamyl 5-phosphate + ADP. The protein operates within amino-acid biosynthesis; L-arginine biosynthesis; N(2)-acetyl-L-ornithine from L-glutamate: step 2/4. In terms of biological role, catalyzes the ATP-dependent phosphorylation of N-acetyl-L-glutamate. The chain is Acetylglutamate kinase from Ectopseudomonas mendocina (strain ymp) (Pseudomonas mendocina).